The chain runs to 183 residues: Ferredoxin-2, mitochondrial (183 aa).

A mitochondrion-targeting transit peptide spans 1–52 (MAASMARGGVSARVLLQAARGTWWNRPGGTSGSGEGVALGTTRKFQATGSRP). Residues 45 to 65 (FQATGSRPAGEEDAGGPERPG) are disordered. The 103-residue stretch at 68-170 (VNVVFVDRSG…GAEFTLPKIT (103 aa)) folds into the 2Fe-2S ferredoxin-type domain. Positions 105, 111, 114, and 151 each coordinate [2Fe-2S] cluster.

Belongs to the adrenodoxin/putidaredoxin family. In terms of assembly, component of the mitochondrial core iron-sulfur cluster (ISC) complex composed of NFS1, LYRM4, NDUFAB1, ISCU, FXN, and FDX2; this complex is a heterohexamer containing two copies of each monomer. Form a heterodimer complex with NFS1. Interacts (in both their reduced and oxidized states) with the cysteine desulfurase complex; this interaction stimulates cysteine desulfurase activity, and serves as a reductant for Fe-S cluster assembly. [2Fe-2S] cluster is required as a cofactor. In terms of tissue distribution, widely expressed, with highest levels in testis, kidney and brain (at protein level). Expressed in muscle (at protein level). Expressed in fibroblasts (at protein level).

Its subcellular location is the mitochondrion. It localises to the mitochondrion matrix. Electron donor, of the core iron-sulfur cluster (ISC) assembly complex, that acts to reduce the persulfide into sulfide during [2Fe-2S] clusters assembly on the scaffolding protein ISCU. The core iron-sulfur cluster (ISC) assembly complex is involved in the de novo synthesis of a [2Fe-2S] cluster, the first step of the mitochondrial iron-sulfur protein biogenesis. This process is initiated by the cysteine desulfurase complex (NFS1:LYRM4:NDUFAB1) that produces persulfide which is delivered on the scaffold protein ISCU in a FXN-dependent manner. Then this complex is stabilized by FDX2 which provides reducing equivalents to accomplish the [2Fe-2S] cluster assembly. Finally, the [2Fe-2S] cluster is transferred from ISCU to chaperone proteins, including HSCB, HSPA9 and GLRX5. Essential for coenzyme Q biosynthesis: together with FDXR, transfers the electrons required for the hydroxylation reaction performed by COQ6. The polypeptide is Ferredoxin-2, mitochondrial (Homo sapiens (Human)).